We begin with the raw amino-acid sequence, 286 residues long: Shikimate dehydrogenase (NADP(+)) (286 aa).

Residues 19–21 (SVS) and Thr-66 each bind shikimate. Lys-70 acts as the Proton acceptor in catalysis. Shikimate is bound by residues Asn-91 and Asp-106. NADP(+)-binding positions include 130–134 (GAGGS) and Ala-225. Tyr-227 contributes to the shikimate binding site. Gly-248 provides a ligand contact to NADP(+).

It belongs to the shikimate dehydrogenase family. As to quaternary structure, homodimer.

The catalysed reaction is shikimate + NADP(+) = 3-dehydroshikimate + NADPH + H(+). Its pathway is metabolic intermediate biosynthesis; chorismate biosynthesis; chorismate from D-erythrose 4-phosphate and phosphoenolpyruvate: step 4/7. Its function is as follows. Involved in the biosynthesis of the chorismate, which leads to the biosynthesis of aromatic amino acids. Catalyzes the reversible NADPH linked reduction of 3-dehydroshikimate (DHSA) to yield shikimate (SA). In Dehalococcoides mccartyi (strain ATCC BAA-2266 / KCTC 15142 / 195) (Dehalococcoides ethenogenes (strain 195)), this protein is Shikimate dehydrogenase (NADP(+)).